A 319-amino-acid chain; its full sequence is Acetyl-coenzyme A carboxylase carboxyl transferase subunit alpha (319 aa).

The 262-residue stretch at 35 to 296 folds into the CoA carboxyltransferase C-terminal domain; that stretch reads NLDEEVQRLR…KAQLLADLND (262 aa).

The protein belongs to the AccA family. As to quaternary structure, acetyl-CoA carboxylase is a heterohexamer composed of biotin carboxyl carrier protein (AccB), biotin carboxylase (AccC) and two subunits each of ACCase subunit alpha (AccA) and ACCase subunit beta (AccD).

It localises to the cytoplasm. It catalyses the reaction N(6)-carboxybiotinyl-L-lysyl-[protein] + acetyl-CoA = N(6)-biotinyl-L-lysyl-[protein] + malonyl-CoA. Its pathway is lipid metabolism; malonyl-CoA biosynthesis; malonyl-CoA from acetyl-CoA: step 1/1. Its function is as follows. Component of the acetyl coenzyme A carboxylase (ACC) complex. First, biotin carboxylase catalyzes the carboxylation of biotin on its carrier protein (BCCP) and then the CO(2) group is transferred by the carboxyltransferase to acetyl-CoA to form malonyl-CoA. This Yersinia pseudotuberculosis serotype O:3 (strain YPIII) protein is Acetyl-coenzyme A carboxylase carboxyl transferase subunit alpha.